The chain runs to 291 residues: ATP synthase subunit b 2 (291 aa).

The chain crosses the membrane as a helical span at residues 2–22; sequence LIDGFTVVAQIVNFLILVWLL.

Belongs to the ATPase B chain family. In terms of assembly, F-type ATPases have 2 components, F(1) - the catalytic core - and F(0) - the membrane proton channel. F(1) has five subunits: alpha(3), beta(3), gamma(1), delta(1), epsilon(1). F(0) has three main subunits: a(1), b(2) and c(10-14). The alpha and beta chains form an alternating ring which encloses part of the gamma chain. F(1) is attached to F(0) by a central stalk formed by the gamma and epsilon chains, while a peripheral stalk is formed by the delta and b chains.

It localises to the cell inner membrane. Functionally, f(1)F(0) ATP synthase produces ATP from ADP in the presence of a proton or sodium gradient. F-type ATPases consist of two structural domains, F(1) containing the extramembraneous catalytic core and F(0) containing the membrane proton channel, linked together by a central stalk and a peripheral stalk. During catalysis, ATP synthesis in the catalytic domain of F(1) is coupled via a rotary mechanism of the central stalk subunits to proton translocation. Component of the F(0) channel, it forms part of the peripheral stalk, linking F(1) to F(0). In Nitrosospira multiformis (strain ATCC 25196 / NCIMB 11849 / C 71), this protein is ATP synthase subunit b 2.